We begin with the raw amino-acid sequence, 437 residues long: Purple acid phosphatase 18 (437 aa).

An N-terminal signal peptide occupies residues 1-23; it reads MEKWGILLLVTLSVSIIFTSAAA. Fe cation contacts are provided by D148, D175, and Y178. D175 serves as a coordination point for Zn(2+). N208 and H291 together coordinate Zn(2+). N208 contacts substrate. The active-site Proton donor is the H301. H328 contacts Zn(2+). 328–330 is a substrate binding site; that stretch reads HVH. H330 contributes to the Fe cation binding site. A glycan (N-linked (GlcNAc...) asparagine) is linked at N390.

The protein belongs to the metallophosphoesterase superfamily. Purple acid phosphatase family. Homodimer. Fe cation serves as cofactor. Zn(2+) is required as a cofactor. As to expression, expressed in roots, stems, leaves, flowers and siliques.

It is found in the secreted. The catalysed reaction is a phosphate monoester + H2O = an alcohol + phosphate. The protein is Purple acid phosphatase 18 (PAP18) of Arabidopsis thaliana (Mouse-ear cress).